The chain runs to 387 residues: Succinate--CoA ligase [ADP-forming] subunit beta (387 aa).

Residues 9–245 (KDLLESYGLK…KSQENAKELK (237 aa)) enclose the ATP-grasp domain. Residues K46, 53 to 55 (GRG), E100, Y103, and E108 each bind ATP. Residues N200 and D214 each contribute to the Mg(2+) site. Residues N265 and 322-324 (GIV) contribute to the substrate site.

Belongs to the succinate/malate CoA ligase beta subunit family. As to quaternary structure, heterotetramer of two alpha and two beta subunits. The cofactor is Mg(2+).

It catalyses the reaction succinate + ATP + CoA = succinyl-CoA + ADP + phosphate. It carries out the reaction GTP + succinate + CoA = succinyl-CoA + GDP + phosphate. It functions in the pathway carbohydrate metabolism; tricarboxylic acid cycle; succinate from succinyl-CoA (ligase route): step 1/1. Functionally, succinyl-CoA synthetase functions in the citric acid cycle (TCA), coupling the hydrolysis of succinyl-CoA to the synthesis of either ATP or GTP and thus represents the only step of substrate-level phosphorylation in the TCA. The beta subunit provides nucleotide specificity of the enzyme and binds the substrate succinate, while the binding sites for coenzyme A and phosphate are found in the alpha subunit. The chain is Succinate--CoA ligase [ADP-forming] subunit beta from Francisella tularensis subsp. mediasiatica (strain FSC147).